Consider the following 1013-residue polypeptide: GTPase-activating Rap/Ran-GAP domain-like protein 3 (1013 aa).

Ser45 is modified (phosphoserine). A Rap-GAP domain is found at 191–407; that stretch reads LLVLEEQEGS…RTLDMLIRSL (217 aa). 2 positions are modified to phosphoserine: Ser426 and Ser432. The CNH domain maps to 489-800; it reads PHEAVCADPW…QLVASRSDIY (312 aa). Disordered stretches follow at residues 810-842 and 913-1013; these read VSSG…SLGE and LLGL…IDLK. Positions 811 to 821 are enriched in low complexity; sequence SSGGSSKGASA. Thr827 bears the Phosphothreonine mark. Residues 952 to 962 show a composition bias toward low complexity; sequence SSSSDRIPSGS. Polar residues-rich tracts occupy residues 963–982 and 993–1003; these read LESA…SSDQ and VSGSSPFQLTA.

The protein belongs to the GARNL3 family.

The protein is GTPase-activating Rap/Ran-GAP domain-like protein 3 (GARNL3) of Homo sapiens (Human).